The sequence spans 49 residues: Astexin-2 (49 aa).

The propeptide occupies 1-25 (MTKRTTIAARRVGLIDLGKATRQTK). A cross-link (isoaspartyl glycine isopeptide (Gly-Asp)) is located at residues 26–34 (GLTQIQALD).

This lasso peptide is hydrolyzed to a linear form by the isopeptidase AtxE2, in vitro. The isopeptidase AtxE2 only recognizes the threaded form (but not the unthreaded form).

The protein resides in the cytoplasm. The protein localises to the secreted. Its function is as follows. Shows weak antimicrobial activity against its phylogenetic relative Caulobacter crescentus. Does not show activity against other bacteria tested (E.coli, Vibrio sp, Burkhoderia thailandensis, and Salmonella newport). The protein is Astexin-2 of Asticcacaulis excentricus (strain ATCC 15261 / DSM 4724 / KCTC 12464 / NCIMB 9791 / VKM B-1370 / CB 48).